We begin with the raw amino-acid sequence, 105 residues long: Large ribosomal subunit protein bL21c (105 aa).

Belongs to the bacterial ribosomal protein bL21 family. As to quaternary structure, part of the 50S ribosomal subunit.

The protein localises to the plastid. It localises to the chloroplast. This protein binds to 23S rRNA. This is Large ribosomal subunit protein bL21c from Trieres chinensis (Marine centric diatom).